The following is a 587-amino-acid chain: Glutamine--tRNA ligase (587 aa).

The 'HIGH' region motif lies at 58-68 (PEPNGYLHIGH). ATP-binding positions include 59–61 (EPN) and 65–71 (HIGHAKS). Residues Asp91 and Tyr240 each contribute to the L-glutamine site. ATP contacts are provided by residues Thr259 and 294–295 (RL). The 'KMSKS' region motif lies at 301–305 (VTSKR).

The protein belongs to the class-I aminoacyl-tRNA synthetase family. As to quaternary structure, monomer.

Its subcellular location is the cytoplasm. It catalyses the reaction tRNA(Gln) + L-glutamine + ATP = L-glutaminyl-tRNA(Gln) + AMP + diphosphate. The protein is Glutamine--tRNA ligase of Bordetella bronchiseptica (strain ATCC BAA-588 / NCTC 13252 / RB50) (Alcaligenes bronchisepticus).